Here is a 268-residue protein sequence, read N- to C-terminus: Glutamate racemase (268 aa).

Substrate is bound by residues 14 to 15 (DS) and 46 to 47 (YG). Residue Cys78 is the Proton donor/acceptor of the active site. 79 to 80 (NS) lines the substrate pocket. Cys190 serves as the catalytic Proton donor/acceptor. 191–192 (TH) is a substrate binding site.

Belongs to the aspartate/glutamate racemases family.

The catalysed reaction is L-glutamate = D-glutamate. The protein operates within cell wall biogenesis; peptidoglycan biosynthesis. Functionally, provides the (R)-glutamate required for cell wall biosynthesis. The protein is Glutamate racemase of Treponema pallidum (strain Nichols).